Here is a 222-residue protein sequence, read N- to C-terminus: Vesicle-associated membrane protein 724 (222 aa).

Topologically, residues methionine 1–leucine 197 are cytoplasmic. The 106-residue stretch at phenylalanine 10–methionine 115 folds into the Longin domain. Residues lysine 131–glutamine 191 form the v-SNARE coiled-coil homology domain. The chain crosses the membrane as a helical; Anchor for type IV membrane protein span at residues valine 198–phenylalanine 218. Residues asparagine 219–aspartate 222 are Vesicular-facing.

It belongs to the synaptobrevin family. In terms of tissue distribution, expressed in flowers, leaves, stems and roots.

It localises to the cell membrane. The protein localises to the early endosome membrane. In terms of biological role, involved in the targeting and/or fusion of transport vesicles to their target membrane. The polypeptide is Vesicle-associated membrane protein 724 (Arabidopsis thaliana (Mouse-ear cress)).